A 1079-amino-acid chain; its full sequence is Error-prone DNA polymerase (1079 aa).

This sequence belongs to the DNA polymerase type-C family. DnaE2 subfamily.

It is found in the cytoplasm. The catalysed reaction is DNA(n) + a 2'-deoxyribonucleoside 5'-triphosphate = DNA(n+1) + diphosphate. Its function is as follows. DNA polymerase involved in damage-induced mutagenesis and translesion synthesis (TLS). It is not the major replicative DNA polymerase. The sequence is that of Error-prone DNA polymerase from Ralstonia pickettii (strain 12J).